A 474-amino-acid polypeptide reads, in one-letter code: Coronin-1C (474 aa).

WD repeat units lie at residues 25 to 70 (DDIR…GRID), 78 to 118 (GHTG…LTLS), 128 to 168 (GHSK…ALIN), 172 to 202 (MHSDMIYNVSWNRNGSLICTASKDKKVRVID), 215 to 249 (AHEGARPMRAIFLADGNVFTTGFSRMSERQLALWN), and 263 to 303 (DTSN…PYVH). Positions 436–474 (QNEAKLDEILKEIKSIKDTICNQDERISKLEQQMAKIAA) form a coiled coil. Lys-446 is subject to N6-acetyllysine.

Belongs to the WD repeat coronin family. In terms of assembly, binds F-actin. Interacts with RCC2. Interacts preferentially with nucleotide-free and GDP-bound RAC1. Interacts with VIM (via head domain). Isoform 1 and isoform 2 appear as homotrimers, while isoform 3 seems to exist as monomers. Interacts with MICAL2; this interaction recruits MICAL2 to the actin filaments. Ubiquitous.

It is found in the cell membrane. The protein localises to the cell projection. It localises to the lamellipodium. The protein resides in the ruffle membrane. Its subcellular location is the cytoplasm. It is found in the cytoskeleton. The protein localises to the cell cortex. It localises to the endosome membrane. The protein resides in the sarcolemma. Its subcellular location is the myofibril. It is found in the sarcomere. The protein localises to the synapse. Its function is as follows. Plays a role in directed cell migration by regulating the activation and subcellular location of RAC1. Increases the presence of activated RAC1 at the leading edge of migrating cells. Required for normal organization of the cytoskeleton, including the actin cytoskeleton, microtubules and the vimentin intermediate filaments. Plays a role in endoplasmic reticulum-associated endosome fission: localizes to endosome membrane tubules and promotes recruitment of TMCC1, leading to recruitment of the endoplasmic reticulum to endosome tubules for fission. Endosome membrane fission of early and late endosomes is essential to separate regions destined for lysosomal degradation from carriers to be recycled to the plasma membrane. Required for normal cell proliferation, cell migration, and normal formation of lamellipodia. Required for normal distribution of mitochondria within cells. In terms of biological role, involved in myogenic differentiation. This is Coronin-1C from Homo sapiens (Human).